The following is a 570-amino-acid chain: MDLFLRLGNVLTEVVTSIFGVTLSEQVLLWNSPKKREYGDFSTAISFLIAKEVRLSLHEVACSIADGLRSFKDLFKNVSVASGGFINVFLTSDTWSEFLAAVSDDAGGYGFSDIGHAVPLNLEFVSANPTGPLHLGHIRGAVLFDIFAELLDKFGFSLTREYYINDAGKQIDLLVYSVFVRFCEQLRKKESDNFPSNCYAGDYIRDIASYLISTFPDSVKDTTELKSFSDTFREVILSLTMDMIKSDLAKLGISYDCYVREKELHEGNYIEKVIAVLDEKGYLDEEELPSPKGKSGDWVERRQKVFLSTKFGDDTNRALQKVDGSWTYFASDVAYHYHKLERGFNHMIVGLGADHAGYVKRLSGVVEALSGGDARIDIKLYNLVNLFRNGKPVKLSKRNGDLITLDDVLESGITVSEIRFAMLTKSSEIVLDFDLDKFVRASYDNPLFYVQYAHARCSSLLRKRGPSAKCDAAMLVEKQELDLMVTLAKLPSLLKVIVVSGEVHKLTFYLHEVAERFHALWNAGMIENKFRFIIEDEPELTNARLILVKAVKNTLASVLKVMKIEPAERM.

The 'HIGH' region signature appears at 127 to 137 (ANPTGPLHLGH).

It belongs to the class-I aminoacyl-tRNA synthetase family. As to quaternary structure, monomer.

It localises to the cytoplasm. It carries out the reaction tRNA(Arg) + L-arginine + ATP = L-arginyl-tRNA(Arg) + AMP + diphosphate. In Neorickettsia sennetsu (strain ATCC VR-367 / Miyayama) (Ehrlichia sennetsu), this protein is Arginine--tRNA ligase.